The sequence spans 582 residues: Arginine--tRNA ligase (582 aa).

Positions 136-146 (ANPTGPMHMGH) match the 'HIGH' region motif.

The protein belongs to the class-I aminoacyl-tRNA synthetase family. In terms of assembly, monomer.

The protein resides in the cytoplasm. The enzyme catalyses tRNA(Arg) + L-arginine + ATP = L-arginyl-tRNA(Arg) + AMP + diphosphate. The chain is Arginine--tRNA ligase from Novosphingobium aromaticivorans (strain ATCC 700278 / DSM 12444 / CCUG 56034 / CIP 105152 / NBRC 16084 / F199).